A 716-amino-acid chain; its full sequence is Polyribonucleotide nucleotidyltransferase (716 aa).

Residues Asp-488 and Asp-494 each coordinate Mg(2+). Residues 555-614 (PKIETITIPTDKIREVIGTGGKVIREIVATTGAKVDINDEGTVKVSASDGAKIKAAIDWI) enclose the KH domain. The S1 motif domain maps to 624 to 692 (GAIYDGKVVK…DRGKTKLSMK (69 aa)). Residues 695–716 (DQETGEDLSKKEAVSPEEAVNT) are disordered.

It belongs to the polyribonucleotide nucleotidyltransferase family. Mg(2+) is required as a cofactor.

The protein resides in the cytoplasm. It carries out the reaction RNA(n+1) + phosphate = RNA(n) + a ribonucleoside 5'-diphosphate. In terms of biological role, involved in mRNA degradation. Catalyzes the phosphorolysis of single-stranded polyribonucleotides processively in the 3'- to 5'-direction. This is Polyribonucleotide nucleotidyltransferase from Caulobacter sp. (strain K31).